The sequence spans 247 residues: Inhibitory synaptic factor 1 (247 aa).

Positions arginine 30–glutamate 65 form a coiled coil. Disordered stretches follow at residues aspartate 69–leucine 90, alanine 112–valine 166, and aspartate 180–lysine 217. The span at glycine 76 to glutamate 85 shows a compositional bias: polar residues.

Belongs to the INSYN1 family.

It localises to the postsynaptic density. In terms of biological role, may be a component of the protein machinery at the inhibitory synapses, probably acting as a scaffold. The protein is Inhibitory synaptic factor 1 of Xenopus laevis (African clawed frog).